The following is a 200-amino-acid chain: Urease accessory protein UreG (200 aa).

Position 8–15 (8–15 (GPVGSGKT)) interacts with GTP.

Belongs to the SIMIBI class G3E GTPase family. UreG subfamily. In terms of assembly, homodimer. UreH, UreF and UreG form a complex that acts as a GTP-hydrolysis-dependent molecular chaperone, activating the urease apoprotein by helping to assemble the nickel containing metallocenter of UreC. The UreE protein probably delivers the nickel.

It localises to the cytoplasm. In terms of biological role, facilitates the functional incorporation of the urease nickel metallocenter. This process requires GTP hydrolysis, probably effectuated by UreG. This chain is Urease accessory protein UreG, found in Helicobacter hepaticus (strain ATCC 51449 / 3B1).